Here is a 120-residue protein sequence, read N- to C-terminus: uncharacterized protein (120 aa).

Positions 80–99 (PTRKLQTPLNEPPRTWRKTA) are disordered.

This is an uncharacterized protein from Goose circovirus (GoCV).